Here is a 461-residue protein sequence, read N- to C-terminus: Cysteine--tRNA ligase (461 aa).

C28 is a binding site for Zn(2+). A 'HIGH' region motif is present at residues 30 to 40; it reads ITVYDLCHIGH. Zn(2+) is bound by residues C209, H234, and E238. Residues 266–270 carry the 'KMSKS' region motif; it reads KMSKS. K269 contributes to the ATP binding site.

Belongs to the class-I aminoacyl-tRNA synthetase family. Monomer. Requires Zn(2+) as cofactor.

It localises to the cytoplasm. The catalysed reaction is tRNA(Cys) + L-cysteine + ATP = L-cysteinyl-tRNA(Cys) + AMP + diphosphate. This is Cysteine--tRNA ligase from Escherichia fergusonii (strain ATCC 35469 / DSM 13698 / CCUG 18766 / IAM 14443 / JCM 21226 / LMG 7866 / NBRC 102419 / NCTC 12128 / CDC 0568-73).